The primary structure comprises 577 residues: Protein NUCLEOLAR COMPLEX ASSOCIATED 4 (577 aa).

The interval 230–263 (PEKQAEKSQHEMWSGSDESISEKPTDKKKKTEKG) is disordered. The next 3 helical transmembrane spans lie at 329-349 (IGGVVSVMALSSLFILMTQHG), 350-370 (LEYPFFYEKLYALLVPSVFVA), and 404-424 (LSLSIPPAGSLVITALIYNLL).

This sequence belongs to the CBF/MAK21 family. In terms of assembly, component of the ribosomal small subunit (SSU) processome composed of at least 40 protein subunits and snoRNA U3. As to expression, mostly expressed in flowers and stems and at lower levels in roots, hypocotyls, siliques, leaves and seeds.

It is found in the nucleus membrane. The protein resides in the nucleus. The protein localises to the nucleolus. In terms of biological role, essential protein required during embryogenesis. Involved in nucleolar processing of ribosomal RNA (rRNA) 40S and 90S ribosomal subunits and ribosome assembly; early in ribosome biogenesis, especially required during the maturation of 5.8S rRNA. Has a role in the nuclear export of 40S pre-ribosomal subunit to the cytoplasm. This Arabidopsis thaliana (Mouse-ear cress) protein is Protein NUCLEOLAR COMPLEX ASSOCIATED 4.